The sequence spans 147 residues: Hemoglobin subunit deltaH (147 aa).

Residues 3-147 (RLTDSEKAEV…MANALAHKYH (145 aa)) enclose the Globin domain. H64 and H93 together coordinate heme b.

The protein belongs to the globin family. In terms of assembly, heterotetramer of two delta chains and two alpha chains. Red blood cells.

This chain is Hemoglobin subunit deltaH, found in Heterohyrax brucei (Yellow-spotted hyrax).